The sequence spans 635 residues: Leucine aminopeptidase 2-2 (635 aa).

Residues 141-143 and 265-270 each bind substrate; these read QCQ and PYGGME. Residue H294 participates in Zn(2+) binding. Residue E295 is the Proton acceptor of the active site. 2 residues coordinate Zn(2+): H298 and E317. Residue Y399 is the Proton donor of the active site.

Belongs to the peptidase M1 family. Zn(2+) serves as cofactor.

It is found in the cytoplasm. The protein resides in the nucleus. The enzyme catalyses an epoxide + H2O = an ethanediol. Aminopeptidase that preferentially cleaves di- and tripeptides. Also has low epoxide hydrolase activity (in vitro). Can hydrolyze the epoxide leukotriene LTA(4) but it forms preferentially 5,6-dihydroxy-7,9,11,14-eicosatetraenoic acid rather than the cytokine leukotriene B(4) as the product compared to the homologous mammalian enzyme (in vitro). This Scheffersomyces stipitis (strain ATCC 58785 / CBS 6054 / NBRC 10063 / NRRL Y-11545) (Yeast) protein is Leucine aminopeptidase 2-2 (LTA4).